The primary structure comprises 191 residues: Protein Ves (191 aa).

Belongs to the Ves family.

The protein is Protein Ves of Escherichia coli O127:H6 (strain E2348/69 / EPEC).